We begin with the raw amino-acid sequence, 722 residues long: Probable acyl-activating enzyme 16, chloroplastic (722 aa).

A chloroplast-targeting transit peptide spans M1–R47.

It belongs to the ATP-dependent AMP-binding enzyme family.

The protein localises to the plastid. It localises to the chloroplast. Its function is as follows. May be involved in the activation of fatty acids to acyl-carrier-protein. This is Probable acyl-activating enzyme 16, chloroplastic (AAE16) from Arabidopsis thaliana (Mouse-ear cress).